The primary structure comprises 473 residues: Peptidoglycan DL-endopeptidase CwlO (473 aa).

An N-terminal signal peptide occupies residues Met-1 to Ala-30. 3 disordered regions span residues Glu-31 to Glu-52, Ala-79 to Glu-98, and Glu-237 to Ile-337. The span at Leu-33–Gln-44 shows a compositional bias: basic and acidic residues. Residues Leu-241 to Ala-250 show a composition bias toward polar residues. Composition is skewed to basic and acidic residues over residues Glu-251–Glu-260 and Lys-267–Asp-277. Residues Ser-291–Ile-337 are compositionally biased toward low complexity. The NlpC/P60 domain occupies Ser-340–Val-471. The Nucleophile role is filled by Cys-377. The active-site Proton acceptor is the His-431. Asn-443 is a catalytic residue.

This sequence belongs to the peptidase C40 family. Identified in the extracellular proteome as a number of processing products of about 50 and 30 kDa.

The protein resides in the secreted. The protein localises to the cell wall. With respect to regulation, detected in exponentially growing cells, the 50 and 30 kDa processing products disappear upon entry into stationary phase with the concomitant appearance of a 20 kDa products. The 50 kDa form persists in the absence of extracellular proteases. Functionally, the C-terminal part of CwlO shows a cell wall hydrolytic DL-endopeptidase activity. This is Peptidoglycan DL-endopeptidase CwlO (cwlO) from Bacillus subtilis (strain 168).